We begin with the raw amino-acid sequence, 745 residues long: Probable xanthine dehydrogenase subunit D (745 aa).

Mo-molybdopterin contacts are provided by Q204, F235, and A508.

The protein belongs to the xanthine dehydrogenase family. As to quaternary structure, could be composed of four subunits: PucA, PucC, PucD and PucE. It depends on Mo-molybdopterin as a cofactor.

The catalysed reaction is xanthine + NAD(+) + H2O = urate + NADH + H(+). It catalyses the reaction hypoxanthine + NAD(+) + H2O = xanthine + NADH + H(+). It functions in the pathway purine metabolism; hypoxanthine degradation; urate from hypoxanthine: step 1/2. It participates in purine metabolism; hypoxanthine degradation; urate from hypoxanthine: step 2/2. Oxidizes hypoxanthine and xanthine to uric acid. This is Probable xanthine dehydrogenase subunit D (pucD) from Bacillus subtilis (strain 168).